The following is a 657-amino-acid chain: Glycogen debranching enzyme (657 aa).

The active-site Nucleophile is D336. The active-site Proton donor is the E371. The segment at A460–I479 is disordered.

This sequence belongs to the glycosyl hydrolase 13 family.

It catalyses the reaction Hydrolysis of (1-&gt;6)-alpha-D-glucosidic linkages to branches with degrees of polymerization of three or four glucose residues in limit dextrin.. The protein operates within glycan degradation; glycogen degradation. Functionally, removes maltotriose and maltotetraose chains that are attached by 1,6-alpha-linkage to the limit dextrin main chain, generating a debranched limit dextrin. The polypeptide is Glycogen debranching enzyme (Enterobacter sp. (strain 638)).